The sequence spans 206 residues: Glutathione peroxidase 1 (206 aa).

The residue at position 37 (Ser-37) is a Phosphoserine. Sec-52 is a catalytic residue. Sec-52 is a non-standard amino acid (selenocysteine). Lys-91, Lys-117, and Lys-151 each carry N6-acetyllysine; alternate. Residues Lys-91, Lys-117, and Lys-151 each carry the N6-succinyllysine; alternate modification. 2 positions are modified to phosphoserine: Ser-200 and Ser-204.

The protein belongs to the glutathione peroxidase family. In terms of assembly, homotetramer. Interacts with MIEN1. During periods of oxidative stress, Sec-52 may react with a superoxide radical, irreversibly lose hydroselenide and be converted to dehydroalanine.

The protein localises to the cytoplasm. Its subcellular location is the mitochondrion. The enzyme catalyses 2 glutathione + H2O2 = glutathione disulfide + 2 H2O. It carries out the reaction a hydroperoxy polyunsaturated fatty acid + 2 glutathione = a hydroxy polyunsaturated fatty acid + glutathione disulfide + H2O. The catalysed reaction is tert-butyl hydroperoxide + 2 glutathione = tert-butanol + glutathione disulfide + H2O. It catalyses the reaction cumene hydroperoxide + 2 glutathione = 2-phenylpropan-2-ol + glutathione disulfide + H2O. The enzyme catalyses (13S)-hydroperoxy-(9Z,11E)-octadecadienoate + 2 glutathione = (13S)-hydroxy-(9Z,11E)-octadecadienoate + glutathione disulfide + H2O. It carries out the reaction (9S)-hydroperoxy-(10E,12Z)-octadecadienoate + 2 glutathione = (9S)-hydroxy-(10E,12Z)-octadecadienoate + glutathione disulfide + H2O. The catalysed reaction is (5S)-hydroperoxy-(6E,8Z,11Z,14Z)-eicosatetraenoate + 2 glutathione = (5S)-hydroxy-(6E,8Z,11Z,14Z)-eicosatetraenoate + glutathione disulfide + H2O. It catalyses the reaction (12S)-hydroperoxy-(5Z,8Z,10E,14Z)-eicosatetraenoate + 2 glutathione = (12S)-hydroxy-(5Z,8Z,10E,14Z)-eicosatetraenoate + glutathione disulfide + H2O. The enzyme catalyses (12R)-hydroperoxy-(5Z,8Z,10E,14Z)-eicosatetraenoate + 2 glutathione = (12R)-hydroxy-(5Z,8Z,10E,14Z)-eicosatetraenoate + glutathione disulfide + H2O. It carries out the reaction (15S)-hydroperoxy-(5Z,8Z,11Z,13E)-eicosatetraenoate + 2 glutathione = (15S)-hydroxy-(5Z,8Z,11Z,13E)-eicosatetraenoate + glutathione disulfide + H2O. The catalysed reaction is (5S)-hydroperoxy-(6E,8Z,11Z,14Z,17Z)-eicosapentaenoate + 2 glutathione = (5S)-hydroxy-(6E,8Z,11Z,14Z,17Z)-eicosapentaenoate + glutathione disulfide + H2O. It catalyses the reaction (12S)-hydroperoxy-(5Z,8Z,10E,14Z,17Z)-eicosapentaenoate + 2 glutathione = (12S)-hydroxy-(5Z,8Z,10E,14Z,17Z)-eicosapentaenoate + glutathione disulfide + H2O. The enzyme catalyses (15S)-hydroperoxy-(5Z,8Z,11Z,13E,17Z)-eicosapentaenoate + 2 glutathione = (15S)-hydroxy-(5Z,8Z,11Z,13E,17Z)-eicosapentaenoate + glutathione disulfide + H2O. It carries out the reaction (15S)-hydroperoxy-(11Z,13E)-eicosadienoate + 2 glutathione = (15S)-hydroxy-(11Z,13E)-eicosadienoate + glutathione disulfide + H2O. The catalysed reaction is (17S)-hydroperoxy-(4Z,7Z,10Z,13Z,15E,19Z)-docosahexaenoate + 2 glutathione = (17S)-hydroxy-(4Z,7Z,10Z,13Z,15E,19Z)-docosahexaenoate + glutathione disulfide + H2O. Its function is as follows. Catalyzes the reduction of hydroperoxides in a glutathione-dependent manner thus regulating cellular redox homeostasis. Can reduce small soluble hydroperoxides such as H2O2, cumene hydroperoxide and tert-butyl hydroperoxide, as well as several fatty acid-derived hydroperoxides. In platelets catalyzes the reduction of 12-hydroperoxyeicosatetraenoic acid, the primary product of the arachidonate 12-lipoxygenase pathway. In Sus scrofa (Pig), this protein is Glutathione peroxidase 1 (GPX1).